A 206-amino-acid polypeptide reads, in one-letter code: Large ribosomal subunit protein uL4 (206 aa).

The segment at Ala43–Ser78 is disordered. Positions Lys49–His58 are enriched in basic and acidic residues. Residues Thr59 to Gly70 show a composition bias toward basic residues.

The protein belongs to the universal ribosomal protein uL4 family. In terms of assembly, part of the 50S ribosomal subunit.

In terms of biological role, one of the primary rRNA binding proteins, this protein initially binds near the 5'-end of the 23S rRNA. It is important during the early stages of 50S assembly. It makes multiple contacts with different domains of the 23S rRNA in the assembled 50S subunit and ribosome. Forms part of the polypeptide exit tunnel. This chain is Large ribosomal subunit protein uL4, found in Cupriavidus metallidurans (strain ATCC 43123 / DSM 2839 / NBRC 102507 / CH34) (Ralstonia metallidurans).